The primary structure comprises 314 residues: NADH-ubiquinone oxidoreductase chain 2 (314 aa).

Transmembrane regions (helical) follow at residues 13–35 (LGVMLIGTILSVSSEELVGVWLG), 61–80 (YFVVQSTGSILMLVGFVSLM), 85–107 (VSGLVMSTAXTVLKSGVFPLHSW), 117–139 (WLASGLMLTWQKVAPLVFLSMIL), 144–166 (LWVVIVSMAGIGAVGGLNQNSVR), 189–209 (VVFVGYFAVYSLSVGLFFYGC), 224–244 (AASGMGLLMLMGMPPFLGFLA), 246–266 (VLVFLMSGSPVIVACIMGSVI), and 294–314 (IWSLVICMNIMGGALILVSFI).

Belongs to the complex I subunit 2 family.

The protein resides in the mitochondrion inner membrane. The enzyme catalyses a ubiquinone + NADH + 5 H(+)(in) = a ubiquinol + NAD(+) + 4 H(+)(out). Its function is as follows. Core subunit of the mitochondrial membrane respiratory chain NADH dehydrogenase (Complex I) that is believed to belong to the minimal assembly required for catalysis. Complex I functions in the transfer of electrons from NADH to the respiratory chain. The immediate electron acceptor for the enzyme is believed to be ubiquinone. The sequence is that of NADH-ubiquinone oxidoreductase chain 2 (ND2) from Mytilus edulis (Blue mussel).